The chain runs to 88 residues: U-scoloptoxin(XY)-Er1b (88 aa).

The N-terminal stretch at 1-24 is a signal peptide; it reads MASQVVLSFALVVVLAVFVGQVDS. The segment at 66–88 is disordered; sequence RPELSPGALDDSSEEKDNEASLA. Positions 79-88 are excised as a propeptide; it reads EEKDNEASLA.

The protein belongs to the scoloptoxin-XY family. Post-translationally, contains 3 disulfide bonds. Expressed by the venom gland.

It is found in the secreted. This is U-scoloptoxin(XY)-Er1b from Ethmostigmus rubripes (Giant centipede).